The primary structure comprises 706 residues: Protein-glutamine gamma-glutamyltransferase 6 (706 aa).

Ca(2+) is bound by residues alanine 223, asparagine 226, and asparagine 228. The active site involves cysteine 274. 5 residues coordinate Ca(2+): aspartate 303, aspartate 305, asparagine 307, serine 309, and aspartate 327. Catalysis depends on residues histidine 333 and aspartate 356. The Ca(2+) site is built by asparagine 396, threonine 417, glutamate 445, and glutamate 450.

It belongs to the transglutaminase superfamily. Transglutaminase family. Ca(2+) is required as a cofactor.

The protein localises to the cytoplasm. The catalysed reaction is L-glutaminyl-[protein] + L-lysyl-[protein] = [protein]-L-lysyl-N(6)-5-L-glutamyl-[protein] + NH4(+). In terms of biological role, catalyzes the cross-linking of proteins and the conjugation of polyamines to proteins. The polypeptide is Protein-glutamine gamma-glutamyltransferase 6 (TGM6) (Homo sapiens (Human)).